A 1603-amino-acid chain; its full sequence is DNA polymerase theta (1603 aa).

A Helicase ATP-binding domain is found at 38–208 (EARQFEDQHL…WLDGAKVFEA (171 aa)). 51–58 (APTSAGKS) contacts ATP. The short motif at 149–152 (DEMH) is the DEAH box element. Residues 283-434 (TDSSLLEILK…GVLTRKRDAE (152 aa)) form the Helicase C-terminal domain.

The protein belongs to the DNA polymerase type-A family.

It localises to the nucleus. The catalysed reaction is DNA(n) + a 2'-deoxyribonucleoside 5'-triphosphate = DNA(n+1) + diphosphate. Its function is as follows. DNA polymerase that promotes microhomology-mediated end-joining (MMEJ), an alternative non-homologous end-joining (NHEJ) machinery triggered in response to double-strand breaks in DNA. MMEJ is an error-prone repair pathway that produces deletions of sequences from the strand being repaired and promotes genomic rearrangements, such as telomere fusions. Required to prevent extensive loss of sequences near G-quadruplex (G4) DNA sites, which are prone to cause genome alterations, by generating deletions. This Caenorhabditis elegans protein is DNA polymerase theta.